The primary structure comprises 252 residues: Aspartate/glutamate leucyltransferase (252 aa).

It belongs to the R-transferase family. Bpt subfamily.

It localises to the cytoplasm. It catalyses the reaction N-terminal L-glutamyl-[protein] + L-leucyl-tRNA(Leu) = N-terminal L-leucyl-L-glutamyl-[protein] + tRNA(Leu) + H(+). The enzyme catalyses N-terminal L-aspartyl-[protein] + L-leucyl-tRNA(Leu) = N-terminal L-leucyl-L-aspartyl-[protein] + tRNA(Leu) + H(+). Functionally, functions in the N-end rule pathway of protein degradation where it conjugates Leu from its aminoacyl-tRNA to the N-termini of proteins containing an N-terminal aspartate or glutamate. This chain is Aspartate/glutamate leucyltransferase, found in Xanthomonas campestris pv. campestris (strain B100).